A 441-amino-acid chain; its full sequence is Ribulose bisphosphate carboxylase large chain (441 aa).

Lys-5 bears the N6,N6,N6-trimethyllysine mark. The substrate site is built by Asn-114 and Thr-164. Lys-166 (proton acceptor) is an active-site residue. Substrate is bound at residue Lys-168. Positions 192, 194, and 195 each coordinate Mg(2+). Lys-192 carries the N6-carboxylysine modification. His-285 functions as the Proton acceptor in the catalytic mechanism. 3 residues coordinate substrate: Arg-286, His-318, and Ser-370.

Belongs to the RuBisCO large chain family. Type I subfamily. Heterohexadecamer of 8 large chains and 8 small chains; disulfide-linked. The disulfide link is formed within the large subunit homodimers. Mg(2+) serves as cofactor. Post-translationally, the disulfide bond which can form in the large chain dimeric partners within the hexadecamer appears to be associated with oxidative stress and protein turnover.

The protein localises to the plastid. It localises to the chloroplast. The enzyme catalyses 2 (2R)-3-phosphoglycerate + 2 H(+) = D-ribulose 1,5-bisphosphate + CO2 + H2O. The catalysed reaction is D-ribulose 1,5-bisphosphate + O2 = 2-phosphoglycolate + (2R)-3-phosphoglycerate + 2 H(+). Functionally, ruBisCO catalyzes two reactions: the carboxylation of D-ribulose 1,5-bisphosphate, the primary event in carbon dioxide fixation, as well as the oxidative fragmentation of the pentose substrate in the photorespiration process. Both reactions occur simultaneously and in competition at the same active site. This chain is Ribulose bisphosphate carboxylase large chain, found in Pellaea andromedifolia (Coffee fern).